Consider the following 178-residue polypeptide: ATP synthase subunit delta (178 aa).

Belongs to the ATPase delta chain family. As to quaternary structure, F-type ATPases have 2 components, F(1) - the catalytic core - and F(0) - the membrane proton channel. F(1) has five subunits: alpha(3), beta(3), gamma(1), delta(1), epsilon(1). F(0) has three main subunits: a(1), b(2) and c(10-14). The alpha and beta chains form an alternating ring which encloses part of the gamma chain. F(1) is attached to F(0) by a central stalk formed by the gamma and epsilon chains, while a peripheral stalk is formed by the delta and b chains.

It is found in the cell membrane. F(1)F(0) ATP synthase produces ATP from ADP in the presence of a proton or sodium gradient. F-type ATPases consist of two structural domains, F(1) containing the extramembraneous catalytic core and F(0) containing the membrane proton channel, linked together by a central stalk and a peripheral stalk. During catalysis, ATP synthesis in the catalytic domain of F(1) is coupled via a rotary mechanism of the central stalk subunits to proton translocation. Functionally, this protein is part of the stalk that links CF(0) to CF(1). It either transmits conformational changes from CF(0) to CF(1) or is implicated in proton conduction. In Streptococcus agalactiae serotype Ia (strain ATCC 27591 / A909 / CDC SS700), this protein is ATP synthase subunit delta.